The chain runs to 379 residues: Lipid-A-disaccharide synthase (379 aa).

This sequence belongs to the LpxB family.

It carries out the reaction a lipid X + a UDP-2-N,3-O-bis[(3R)-3-hydroxyacyl]-alpha-D-glucosamine = a lipid A disaccharide + UDP + H(+). Its pathway is bacterial outer membrane biogenesis; LPS lipid A biosynthesis. In terms of biological role, condensation of UDP-2,3-diacylglucosamine and 2,3-diacylglucosamine-1-phosphate to form lipid A disaccharide, a precursor of lipid A, a phosphorylated glycolipid that anchors the lipopolysaccharide to the outer membrane of the cell. The chain is Lipid-A-disaccharide synthase from Pseudomonas fluorescens (strain SBW25).